The chain runs to 362 residues: Solute carrier family 25 member 3 (362 aa).

The N-terminal 49 residues, 1 to 49 (MFSSVAHLARANPFNTPHLQLVHDGLGDLRSSSPGPTGQPRRPRNLAAA), are a transit peptide targeting the mitochondrion. Over 50–63 (AVEEQYSCDYGSGR) the chain is Mitochondrial intermembrane. Solcar repeat units follow at residues 63–147 (RFFI…FKVL), 160–244 (WRTS…TVEA), and 261–339 (EQLV…VKVY). Residues 64–86 (FFILCGLGGIISCGTTHTALVPL) form a helical membrane-spanning segment. The Mitochondrial matrix segment spans residues 87 to 121 (DLVKCRMQVDPQKYKGIFNGFSVTLKEDGVRGLAK). An N6-acetyllysine modification is found at Lys99. Lys112 is modified (N6-methyllysine). Residues 122–141 (GWAPTFLGYSMQGLCKFGFY) form a helical membrane-spanning segment. Topologically, residues 142–161 (EVFKVLYSNMLGEENTYLWR) are mitochondrial intermembrane. A helical transmembrane segment spans residues 162–183 (TSLYLAASASAEFFADIALAPM). The Mitochondrial matrix portion of the chain corresponds to 184–218 (EAAKVRIQTQPGYANTLRDAAPKMYKEEGLKAFYK). Tyr196 is modified (phosphotyrosine). At Lys209 the chain carries N6-acetyllysine. Residues 219–238 (GVAPLWMRQIPYTMMKFACF) traverse the membrane as a helical segment. The Mitochondrial intermembrane portion of the chain corresponds to 239–261 (ERTVEALYKFVVPKPRSECSKPE). Residues 262–284 (QLVVTFVAGYIAGVFCAIVSHPA) form a helical membrane-spanning segment. The Mitochondrial matrix portion of the chain corresponds to 285-314 (DSVVSVLNKEKGSSASLVLKRLGFKGVWKG). A helical transmembrane segment spans residues 315-333 (LFARIIMIGTLTALQWFIY). Residues 334–362 (DSVKVYFRLPRPPPPEMPESLKKKLGLTQ) are Mitochondrial intermembrane-facing.

It belongs to the mitochondrial carrier (TC 2.A.29) family. Interacts with PPIF; the interaction is impaired by CsA.

It is found in the mitochondrion inner membrane. It catalyses the reaction phosphate(in) + H(+)(in) = phosphate(out) + H(+)(out). In terms of biological role, inorganic ion transporter that transports phosphate or copper ions across the mitochondrial inner membrane into the matrix compartment. Mediates proton-coupled symport of phosphate ions necessary for mitochondrial oxidative phosphorylation of ADP to ATP. Transports copper ions probably in the form of anionic copper(I) complexes to maintain mitochondrial matrix copper pool and to supply copper for cytochrome C oxidase complex assembly. May also play a role in regulation of the mitochondrial permeability transition pore (mPTP). This chain is Solute carrier family 25 member 3, found in Homo sapiens (Human).